Here is a 417-residue protein sequence, read N- to C-terminus: Carbon catabolite repressor protein 4 homolog 4 (417 aa).

The residue at position 2 (Phe-2) is an N-acetylserine. Glu-143 is a binding site for Mg(2+).

It belongs to the CCR4/nocturin family. Component of the CCR4-NOT complex, at least composed of CRR4 and CAF1 proteins. Forms homooligomers. Mg(2+) is required as a cofactor.

The protein resides in the nucleus. The protein localises to the cytoplasm. The catalysed reaction is Exonucleolytic cleavage of poly(A) to 5'-AMP.. Functionally, acts as a catalytic component of the CCR4-NOT core complex, which in the nucleus seems to be a general transcription factor, and in the cytoplasm the major mRNA deadenylase involved in mRNA turnover. Transcriptional regulator of circadian rhythms with poly(A)-degrading activity that affects the expression and rhythmicity of the clock core oscillator genes TOC1 and CCA1. Deadenylation may be a mechanism involved in the regulation of the circadian clock. May play a negative role in response against oxidative stress. Possesses magnesium-dependent poly(A)-specific exoribonuclease activity in vitro and is almost inactive with poly(U), poly(C) and poly(G) as substrates. This chain is Carbon catabolite repressor protein 4 homolog 4, found in Arabidopsis thaliana (Mouse-ear cress).